The chain runs to 217 residues: UPF0502 protein AHA_2872 (217 aa).

This sequence belongs to the UPF0502 family.

The chain is UPF0502 protein AHA_2872 from Aeromonas hydrophila subsp. hydrophila (strain ATCC 7966 / DSM 30187 / BCRC 13018 / CCUG 14551 / JCM 1027 / KCTC 2358 / NCIMB 9240 / NCTC 8049).